Reading from the N-terminus, the 306-residue chain is MSRPRKRWRDVDGVFLLDKPQGMSSNDIMQKVKRLFQANKAGHTGALDPLATGMLPICLGEATKFSQFLLDADKRYLVTAKLGERTDTSDAEGQVVETREVHVETPQILTALEQFRGDILQVPTMFSALKHNGKPLYEYARQGITVEREARPITIFELNFIEYHAPFLTLEVHCSKGTYIRTLVDDLGEVLGCGAHVTMLRRTAVADYPVAEMIPINELQLLAESFPLSELDRLLLPTDTAVSKLPALHLDVEQSKAIGFGQRVKFANEQQLGGQVRLFSAENLFLGVALIDGNIIRPQRLITQSA.

Catalysis depends on Asp48, which acts as the Nucleophile.

The protein belongs to the pseudouridine synthase TruB family. Type 1 subfamily.

The enzyme catalyses uridine(55) in tRNA = pseudouridine(55) in tRNA. Its function is as follows. Responsible for synthesis of pseudouridine from uracil-55 in the psi GC loop of transfer RNAs. This chain is tRNA pseudouridine synthase B, found in Haemophilus influenzae (strain 86-028NP).